Reading from the N-terminus, the 195-residue chain is Endoribonuclease YbeY (195 aa).

Residues His-153, His-157, and His-163 each coordinate Zn(2+).

It belongs to the endoribonuclease YbeY family. It depends on Zn(2+) as a cofactor.

It localises to the cytoplasm. Single strand-specific metallo-endoribonuclease involved in late-stage 70S ribosome quality control and in maturation of the 3' terminus of the 16S rRNA. The sequence is that of Endoribonuclease YbeY from Prochlorococcus marinus (strain SARG / CCMP1375 / SS120).